The sequence spans 158 residues: ABA-responsive protein ABR18 (158 aa).

This sequence belongs to the BetVI family.

The chain is ABA-responsive protein ABR18 from Pisum sativum (Garden pea).